An 85-amino-acid chain; its full sequence is MNNKVHVLQGIVIRSKMQKSIVVSINRIVKHSMYKKFINRTTKIYVHDTNNISNVGDIVEITECRPISKTKCWKLTSIIKKYNSS.

Belongs to the universal ribosomal protein uS17 family. Part of the 30S ribosomal subunit.

Functionally, one of the primary rRNA binding proteins, it binds specifically to the 5'-end of 16S ribosomal RNA. In Blochmanniella floridana, this protein is Small ribosomal subunit protein uS17.